Here is a 305-residue protein sequence, read N- to C-terminus: MQRLSPGEFKTLISKERKSHFITPFALVYKTFCDLGYDQKNSDYFLNNPSEYIIAMRKNCWKEFEPFEKEFTTRMLSYLIDEERIKDMSPYDAIRDFTMEYPTHIYDLALSNTQSRRSRAGKEFESILELLMMGAGIPVDVQGAIGKSFFQKNQIGKLVDLVMPGVVQYTSNKRNTMLISAKTTLRERWQEVPEEVNRTGIREMYLATLDDSFSEETINILYEANVVVVTTIENKNFKYKNNNRVLTFEDMLQSAMELSRKWNNVSYTDSEKEEIQRSILKQIEKYSDFPYVVNYYRNRLSALFD.

The catalysed reaction is Endonucleolytic cleavage of DNA to give specific double-stranded fragments with terminal 5'-phosphates.. Its function is as follows. A P subtype restriction enzyme that recognizes the double-stranded sequence 5'-CCNGG-3' and cleaves before C-1. This is Type II restriction enzyme SsoII (ssoIIR) from Shigella sonnei.